The following is a 442-amino-acid chain: Putative arsenical pump membrane protein (442 aa).

A run of 11 helical transmembrane segments spans residues 22-42 (IPAT…LADL), 56-76 (ILAT…YWVA), 85-105 (GSGI…TIFL), 107-127 (NDGS…YLGL), 136-156 (LLSG…SNIV), 174-194 (MMFV…FMFF), 250-270 (LFAA…GSFI), 294-314 (IFIF…IGFT), 328-347 (SLAH…SNLF), 378-398 (IIGS…TLIW), and 419-439 (IIII…WISW).

It belongs to the ArsB family.

It localises to the cell membrane. This Bacillus subtilis (strain 168) protein is Putative arsenical pump membrane protein (ywrK).